The chain runs to 530 residues: NMDA receptor synaptonuclear signaling and neuronal migration factor (530 aa).

The N-myristoyl glycine moiety is linked to residue Gly2. The necessary and sufficient to elicit dendritic processes and synaptic contacts stretch occupies residues 2 to 233 (GAAASRRRAL…FSFQTATTTM (232 aa)). Disordered regions lie at residues 34–67 (SQSH…APQN) and 125–197 (KGRR…GRRK). A compositionally biased stretch (basic and acidic residues) spans 38 to 48 (PENRNGADHLL). Basic residues predominate over residues 125–137 (KGRRQRHPHHHSQ). Over residues 153 to 162 (PCQSWAGSRQ) the composition is skewed to polar residues. Ser204 carries the post-translational modification Phosphoserine. Positions 247–250 (RRKR) match the Nuclear localization signal motif. Residues 285–312 (RSFSRSWSDPTPMKADTSHDSRDSSDLQ) are disordered. Residues Ser290 and Ser292 each carry the phosphoserine modification. The span at 300 to 309 (DTSHDSRDSS) shows a compositional bias: basic and acidic residues.

Belongs to the NSMF family. As to quaternary structure, interacts with KPNA1; the interaction occurs in a calcium-independent manner after synaptic NMDA receptor stimulation and is required for nuclear import of NSMF but is competed by CABP1. Interacts (via the central NLS-containing motif region) with CABP1 (via EF-hands 1 and 2); the interaction occurs in a calcium-dependent manner after synaptic NMDA receptor stimulation and prevents the nuclear import of NSMF. Cannot be competed by calmodulin. In terms of processing, proteolytically processed after NMDA receptor activation. Cleaved in a calcium-dependent and calpain-sensitive manner. Calpain cleavage is essential for the translocation process from dendrites to the nucleus. In terms of tissue distribution, highly expressed in adult and fetal brain. Weakly expressed in heart, liver, spleen, testis, small intestine, skeletal muscle, peripheral white blood cells and kidney.

The protein localises to the nucleus. It is found in the nucleus envelope. Its subcellular location is the nucleus membrane. The protein resides in the nucleus matrix. It localises to the cytoplasm. The protein localises to the cell cortex. It is found in the cytoskeleton. Its subcellular location is the cell membrane. The protein resides in the cell projection. It localises to the dendrite. The protein localises to the synapse. It is found in the synaptosome. Its subcellular location is the postsynaptic density. The protein resides in the membrane. In terms of biological role, couples NMDA-sensitive glutamate receptor signaling to the nucleus and triggers long-lasting changes in the cytoarchitecture of dendrites and spine synapse processes. Part of the cAMP response element-binding protein (CREB) shut-off signaling pathway. Stimulates outgrowth of olfactory axons and migration of gonadotropin-releasing hormone (GnRH) and luteinizing-hormone-releasing hormone (LHRH) neuronal cells. This is NMDA receptor synaptonuclear signaling and neuronal migration factor (NSMF) from Homo sapiens (Human).